The chain runs to 155 residues: MVWDATNIFLFAANILTVLYILYNDAVIPLWKGKTVLSVKLRSRGRWDGYIFVGIIVLLFVSNTFFREGPFSTSVLLGIMGVLFIYICFFRSSKAVFKESGLFYALLFFPYAKIERMNLSEDGVLVIETNRQRLMLFARSEKDLEKMLAVFTTYS.

A run of 3 helical transmembrane segments spans residues 8 to 28 (IFLFAANILTVLYILYNDAVI), 46 to 66 (RWDGYIFVGIIVLLFVSNTFF), and 70 to 90 (PFSTSVLLGIMGVLFIYICFF).

It belongs to the UPF0266 family.

The protein localises to the cell membrane. This is UPF0266 membrane protein LMHCC_1856 from Listeria monocytogenes serotype 4a (strain HCC23).